Here is a 342-residue protein sequence, read N- to C-terminus: Ribosomal RNA small subunit methyltransferase H (342 aa).

S-adenosyl-L-methionine contacts are provided by residues 36-38, Asp56, Phe82, Asp100, and Gln107; that span reads GGH. Residues 309-342 are disordered; the sequence is ENRESGMGKGHGAAASRFPTPDSRFPTSPNGDAP. Residues 333–342 show a composition bias toward polar residues; it reads FPTSPNGDAP.

The protein belongs to the methyltransferase superfamily. RsmH family.

Its subcellular location is the cytoplasm. It carries out the reaction cytidine(1402) in 16S rRNA + S-adenosyl-L-methionine = N(4)-methylcytidine(1402) in 16S rRNA + S-adenosyl-L-homocysteine + H(+). Functionally, specifically methylates the N4 position of cytidine in position 1402 (C1402) of 16S rRNA. The protein is Ribosomal RNA small subunit methyltransferase H of Xanthomonas campestris pv. campestris (strain 8004).